The primary structure comprises 374 residues: Chaperone protein DnaJ (374 aa).

The region spanning 5-70 (DYYEVLGVSK…QKRAAYDQYG (66 aa)) is the J domain. The CR-type zinc finger occupies 132–210 (GTTVKIRVPT…CHGHGRVEET (79 aa)). Zn(2+) is bound by residues cysteine 145, cysteine 148, cysteine 162, cysteine 165, cysteine 184, cysteine 187, cysteine 198, and cysteine 201. 4 CXXCXGXG motif repeats span residues 145 to 152 (CKPCGGSG), 162 to 169 (CTTCGGHG), 184 to 191 (CPNCRGQG), and 198 to 205 (CKECHGHG).

It belongs to the DnaJ family. Homodimer. Zn(2+) is required as a cofactor.

The protein localises to the cytoplasm. Participates actively in the response to hyperosmotic and heat shock by preventing the aggregation of stress-denatured proteins and by disaggregating proteins, also in an autonomous, DnaK-independent fashion. Unfolded proteins bind initially to DnaJ; upon interaction with the DnaJ-bound protein, DnaK hydrolyzes its bound ATP, resulting in the formation of a stable complex. GrpE releases ADP from DnaK; ATP binding to DnaK triggers the release of the substrate protein, thus completing the reaction cycle. Several rounds of ATP-dependent interactions between DnaJ, DnaK and GrpE are required for fully efficient folding. Also involved, together with DnaK and GrpE, in the DNA replication of plasmids through activation of initiation proteins. The chain is Chaperone protein DnaJ from Saccharophagus degradans (strain 2-40 / ATCC 43961 / DSM 17024).